The primary structure comprises 171 residues: 16S rRNA aminocarboxypropyltransferase (171 aa).

Thr-17, Leu-67, Leu-90, and Thr-109 together coordinate S-adenosyl-L-methionine.

Belongs to the TDD superfamily. TSR3 family.

Its subcellular location is the cytoplasm. The catalysed reaction is an N(1)-methylpseudouridine in rRNA + S-adenosyl-L-methionine = N(1)-methyl-N(3)-[(3S)-3-amino-3-carboxypropyl]pseudouridine in rRNA + S-methyl-5'-thioadenosine + H(+). In terms of biological role, aminocarboxypropyltransferase that catalyzes the aminocarboxypropyl transfer on pseudouridine corresponding to position 914 in M.jannaschii 16S rRNA. It constitutes the last step in biosynthesis of the hypermodified N1-methyl-N3-(3-amino-3-carboxypropyl) pseudouridine (m1acp3-Psi). The protein is 16S rRNA aminocarboxypropyltransferase of Methanobrevibacter smithii (strain ATCC 35061 / DSM 861 / OCM 144 / PS).